The sequence spans 464 residues: Glutathione reductase (464 aa).

The FAD site is built by Ser-17 and Gly-18. Ser-17 is a glutathione binding site. Glutathione is bound at residue Arg-24. Residues Glu-37, Thr-45, Cys-46, and Lys-54 each coordinate FAD. A disulfide bond links Cys-46 and Cys-51. Tyr-103 contacts glutathione. Ala-119 contributes to the FAD binding site. Residues Ala-186, Ile-189, Glu-192, Arg-209, Arg-215, and Gly-274 each contribute to the NADP(+) site. FAD is bound at residue Asp-315. Glu-321 is an NADP(+) binding site. Thr-323 provides a ligand contact to FAD. Arg-331 lines the glutathione pocket. Val-354 serves as a coordination point for NADP(+). His-453 provides a ligand contact to FAD. His-453 acts as the Proton acceptor in catalysis.

This sequence belongs to the class-I pyridine nucleotide-disulfide oxidoreductase family. As to quaternary structure, homodimer. It depends on FAD as a cofactor.

It localises to the cytoplasm. Its subcellular location is the mitochondrion. It catalyses the reaction 2 glutathione + NADP(+) = glutathione disulfide + NADPH + H(+). Catalyzes the reduction of glutathione disulfide (GSSG) to reduced glutathione (GSH). Constitutes the major mechanism to maintain a high GSH:GSSG ratio in the cytosol. This chain is Glutathione reductase (pgr1), found in Schizosaccharomyces pombe (strain 972 / ATCC 24843) (Fission yeast).